A 1755-amino-acid chain; its full sequence is Gag-Pro-Pol polyprotein (1755 aa).

A lipid anchor (N-myristoyl glycine; by host) is attached at glycine 2. 2 stretches are compositionally biased toward basic and acidic residues: residues 151–169 and 178–191; these read YDEP…EKDH and QRKE…KEKD. The interval 151 to 191 is disordered; sequence YDEPYEEKEKADKNEEKDHVRKIKKVVQRKENSEGKRKEKD. A PTAP/PSAP motif motif is present at residues 305 to 308; sequence PSAP. 2 consecutive CCHC-type zinc fingers follow at residues 525-542 and 552-569; these read PVCF…DCKD and GLCP…ECKS. Residues 572–631 are disordered; that stretch reads DKDGNPLPPLETNAENSKNLVKGQSPSPAQKGDGVKGSGLNPEAPPFTIHDLPRGTPGSA. Over residues 584–599 the composition is skewed to polar residues; sequence NAENSKNLVKGQSPSP. Residues 766 to 841 form the Peptidase A2 domain; the sequence is FLGLLDTGAD…LPFTLWGRDI (76 aa). Catalysis depends on aspartate 771, which acts as the Protease; shared with dimeric partner. A Reverse transcriptase domain is found at 905–1093; that stretch reads LQLGHLEESN…DNLKYLGTHI (189 aa). The Mg(2+) site is built by aspartate 970, aspartate 1045, aspartate 1046, aspartate 1316, glutamate 1346, aspartate 1366, and aspartate 1429. The RNase H type-1 domain maps to 1307-1437; it reads LEKGIVIFTD…ADSLTRILTA (131 aa). The Integrase-type zinc-finger motif lies at 1436–1477; sequence TALESAQESHALHHQNAAALRFQFHITREQAREIVKLCPNCP. Zn(2+) is bound by residues histidine 1445, histidine 1449, cysteine 1473, and cysteine 1476. Residues 1490–1647 form the Integrase catalytic domain; it reads RGLKPRVLWQ…TAAERHWGPI (158 aa). Residues aspartate 1501, aspartate 1558, and glutamate 1594 each contribute to the Mg(2+) site. A DNA-binding region (integrase-type) is located at residues 1653–1702; it reads PMVMWKDLLTGSWKGPDVLITAGRGYACVFPQDAETPIWVPDRFIRPFTE. The interval 1699-1755 is disordered; it reads PFTERKEATPTPGTAEKTPPRDEKDQQESPKNESSPHQREDGLATSAGVDLRSGGGP. Over residues 1716–1740 the composition is skewed to basic and acidic residues; it reads TPPRDEKDQQESPKNESSPHQREDG.

The protein belongs to the retroviral Pol polyprotein family. In terms of assembly, homodimer; when myristoylated. Homodimer. As to quaternary structure, homooctamer. In terms of assembly, homotrimer. Mg(2+) serves as cofactor. Post-translationally, specific enzymatic cleavages in vivo yield mature proteins. In terms of processing, released by autocatalytic processing. Myristoylated. Myristoylation of the matrix (MA) domain mediates the transport and binding of Gag polyproteins to the host plasma membrane and is required for the assembly of viral particles.

It is found in the virion. The enzyme catalyses DNA(n) + a 2'-deoxyribonucleoside 5'-triphosphate = DNA(n+1) + diphosphate. It carries out the reaction Endonucleolytic cleavage to 5'-phosphomonoester.. The catalysed reaction is dUTP + H2O = dUMP + diphosphate + H(+). Its activity is regulated as follows. Inhibited by pepstatin A. Functionally, matrix protein. Nucleocapsid protein p14: Binds strongly to viral nucleic acids and promote their aggregation. Also destabilizes the nucleic acids duplexes via highly structured zinc-binding motifs. Its function is as follows. Capsid protein. In terms of biological role, NC-dUTPase has dUTPase activity, thereby preventing incorporation of uracil into DNA. Functionally, the aspartyl protease mediates proteolytic cleavages of Gag and Gag-Pol polyproteins during or shortly after the release of the virion from the plasma membrane. Cleavages take place as an ordered, step-wise cascade to yield mature proteins. This process is called maturation. Displays maximal activity during the budding process just prior to particle release from the cell. RT is a multifunctional enzyme that converts the viral dimeric RNA genome into dsDNA in the cytoplasm, shortly after virus entry into the cell. This enzyme displays a DNA polymerase activity that can copy either DNA or RNA templates, and a ribonuclease H (RNase H) activity that cleaves the RNA strand of RNA-DNA heteroduplexes in a partially processive 3' to 5' endonucleasic mode. Conversion of viral genomic RNA into dsDNA requires many steps. A tRNA binds to the primer-binding site (PBS) situated at the 5' end of the viral RNA. RT uses the 3' end of the tRNA primer to perfom a short round of RNA-dependent minus-strand DNA synthesis. The reading proceeds through the U5 region and ends after the repeated (R) region which is present at both ends of viral RNA. The portion of the RNA-DNA heteroduplex is digested by the RNase H, resulting in a ssDNA product attached to the tRNA primer. This ssDNA/tRNA hybridizes with the identical R region situated at the 3' end of viral RNA. This template exchange, known as minus-strand DNA strong stop transfer, can be either intra- or intermolecular. RT uses the 3' end of this newly synthesized short ssDNA to perfom the RNA-dependent minus-strand DNA synthesis of the whole template. RNase H digests the RNA template except for a polypurine tract (PPT) situated at the 5' end of the genome. It is not clear if both polymerase and RNase H activities are simultaneous. RNase H probably can proceed both in a polymerase-dependent (RNA cut into small fragments by the same RT performing DNA synthesis) and a polymerase-independent mode (cleavage of remaining RNA fragments by free RTs). Secondly, RT performs DNA-directed plus-strand DNA synthesis using the PPT that has not been removed by RNase H as primers. PPT and tRNA primers are then removed by RNase H. The 3' and 5' ssDNA PBS regions hybridize to form a circular dsDNA intermediate. Strand displacement synthesis by RT to the PBS and PPT ends produces a blunt ended, linear dsDNA copy of the viral genome that includes long terminal repeats (LTRs) at both ends. Its function is as follows. Catalyzes viral DNA integration into the host chromosome, by performing a series of DNA cutting and joining reactions. The sequence is that of Gag-Pro-Pol polyprotein (gag-pro-pol) from Mus musculus (Mouse).